An 850-amino-acid chain; its full sequence is Pre-mRNA-splicing factor SYF1 (850 aa).

HAT repeat units lie at residues 10-42 (GLLC…FKSS), 46-78 (CTFQ…VVLQ), 90-122 (SEIL…FLVE), 126-160 (YEIT…FADD), 208-247 (GDVK…LLVN), 408-442 (AALR…VYAS), 444-480 (NDVK…LFVK), 500-531 (GKFD…LLES), 574-609 (NFYE…KIIK), 612-653 (LNIE…QYEQ), 708-744 (NDHN…FETE), and 746-782 (MEFN…FELN).

This sequence belongs to the crooked-neck family. As to quaternary structure, associated with the spliceosome.

Its subcellular location is the nucleus. Functionally, involved in pre-mRNA splicing and cell cycle progression. This chain is Pre-mRNA-splicing factor SYF1 (SYF1), found in Debaryomyces hansenii (strain ATCC 36239 / CBS 767 / BCRC 21394 / JCM 1990 / NBRC 0083 / IGC 2968) (Yeast).